The chain runs to 635 residues: Chaperone protein DnaK (635 aa).

T198 is modified (phosphothreonine; by autocatalysis). The tract at residues 606–635 is disordered; the sequence is QATAASPGAEAPKADDDVVDAEFSEVDENK. Positions 622–635 are enriched in acidic residues; the sequence is DVVDAEFSEVDENK.

The protein belongs to the heat shock protein 70 family.

Functionally, acts as a chaperone. This chain is Chaperone protein DnaK, found in Novosphingobium aromaticivorans (strain ATCC 700278 / DSM 12444 / CCUG 56034 / CIP 105152 / NBRC 16084 / F199).